The sequence spans 120 residues: NAD(P)H-quinone oxidoreductase subunit 3, chloroplastic (120 aa).

The next 3 helical transmembrane spans lie at I9–G29, M64–M84, and V88–L108.

It belongs to the complex I subunit 3 family. NDH is composed of at least 16 different subunits, 5 of which are encoded in the nucleus.

It is found in the plastid. It localises to the chloroplast thylakoid membrane. The catalysed reaction is a plastoquinone + NADH + (n+1) H(+)(in) = a plastoquinol + NAD(+) + n H(+)(out). It catalyses the reaction a plastoquinone + NADPH + (n+1) H(+)(in) = a plastoquinol + NADP(+) + n H(+)(out). Functionally, NDH shuttles electrons from NAD(P)H:plastoquinone, via FMN and iron-sulfur (Fe-S) centers, to quinones in the photosynthetic chain and possibly in a chloroplast respiratory chain. The immediate electron acceptor for the enzyme in this species is believed to be plastoquinone. Couples the redox reaction to proton translocation, and thus conserves the redox energy in a proton gradient. This is NAD(P)H-quinone oxidoreductase subunit 3, chloroplastic from Lupinus luteus (European yellow lupine).